A 288-amino-acid chain; its full sequence is Undecaprenyl-diphosphatase (288 aa).

A run of 8 helical transmembrane segments spans residues 25-45 (GITE…NEFL), 53-73 (FIDM…MVIY), 93-113 (WKLW…GLLL), 121-141 (LSNF…FIWI), 171-191 (VLSI…GIIV), 196-216 (SVAA…YSGL), 231-251 (GQAA…LFVI), and 263-283 (FTVF…YGAV).

The protein belongs to the UppP family.

It is found in the cell membrane. It carries out the reaction di-trans,octa-cis-undecaprenyl diphosphate + H2O = di-trans,octa-cis-undecaprenyl phosphate + phosphate + H(+). Functionally, catalyzes the dephosphorylation of undecaprenyl diphosphate (UPP). Confers resistance to bacitracin. The chain is Undecaprenyl-diphosphatase from Streptococcus thermophilus (strain CNRZ 1066).